We begin with the raw amino-acid sequence, 454 residues long: UDP-N-acetylmuramoylalanine--D-glutamate ligase (454 aa).

G114–T120 contributes to the ATP binding site.

The protein belongs to the MurCDEF family.

The protein localises to the cytoplasm. The enzyme catalyses UDP-N-acetyl-alpha-D-muramoyl-L-alanine + D-glutamate + ATP = UDP-N-acetyl-alpha-D-muramoyl-L-alanyl-D-glutamate + ADP + phosphate + H(+). It functions in the pathway cell wall biogenesis; peptidoglycan biosynthesis. Cell wall formation. Catalyzes the addition of glutamate to the nucleotide precursor UDP-N-acetylmuramoyl-L-alanine (UMA). In Desulfitobacterium hafniense (strain Y51), this protein is UDP-N-acetylmuramoylalanine--D-glutamate ligase.